The chain runs to 160 residues: Protein BOLA1, chloroplastic (160 aa).

The N-terminal 50 residues, 1-50 (MFSSSIRLIVSGFHRTQPLKSPVNSPSVFISVPKFFNSESKSTGTGSRSV), are a transit peptide targeting the chloroplast. Polar residues predominate over residues 39–61 (ESKSTGTGSRSVAMSSVEKTGSD). The tract at residues 39 to 66 (ESKSTGTGSRSVAMSSVEKTGSDSGAIE) is disordered.

Belongs to the bolA/yrbA family. Interacts in vitro with GRXS14, GRXS15, GRXS16 and GRXS17, but not with GRXC5. Interacts in vivo only with GRXS14 and GRXS16.

It localises to the plastid. The protein localises to the chloroplast. Its function is as follows. May act either alone or in interaction with glutaredoxin as a redox-regulated transcriptional regulator, or as a factor regulating Fe-S cluster biogenesis. The glutaredoxin-BOLA1 heterodimers bind a labile, oxygen sensitive iron-sulfur cluster. In Arabidopsis thaliana (Mouse-ear cress), this protein is Protein BOLA1, chloroplastic.